Consider the following 141-residue polypeptide: Large ribosomal subunit protein uL11 (141 aa).

It belongs to the universal ribosomal protein uL11 family. Part of the ribosomal stalk of the 50S ribosomal subunit. Interacts with L10 and the large rRNA to form the base of the stalk. L10 forms an elongated spine to which L12 dimers bind in a sequential fashion forming a multimeric L10(L12)X complex. In terms of processing, one or more lysine residues are methylated.

Its function is as follows. Forms part of the ribosomal stalk which helps the ribosome interact with GTP-bound translation factors. The chain is Large ribosomal subunit protein uL11 from Geobacillus kaustophilus (strain HTA426).